The following is a 436-amino-acid chain: 3-ketoacyl-CoA thiolase (436 aa).

The Acyl-thioester intermediate role is filled by Cys-99. Catalysis depends on proton acceptor residues His-392 and Cys-422.

It belongs to the thiolase-like superfamily. Thiolase family. In terms of assembly, heterotetramer of two alpha chains (FadJ) and two beta chains (FadI).

Its subcellular location is the cytoplasm. The enzyme catalyses an acyl-CoA + acetyl-CoA = a 3-oxoacyl-CoA + CoA. It functions in the pathway lipid metabolism; fatty acid beta-oxidation. In terms of biological role, catalyzes the final step of fatty acid oxidation in which acetyl-CoA is released and the CoA ester of a fatty acid two carbons shorter is formed. The polypeptide is 3-ketoacyl-CoA thiolase (Salmonella paratyphi A (strain ATCC 9150 / SARB42)).